Here is a 272-residue protein sequence, read N- to C-terminus: HMP-PP phosphatase (272 aa).

The active-site Nucleophile is Asp-8. Mg(2+) is bound by residues Asp-8, Asp-10, and Asp-212.

Belongs to the HAD-like hydrolase superfamily. Cof family. Mg(2+) serves as cofactor.

The catalysed reaction is 4-amino-2-methyl-5-(diphosphooxymethyl)pyrimidine + H2O = 4-amino-2-methyl-5-(phosphooxymethyl)pyrimidine + phosphate + H(+). In terms of biological role, catalyzes the hydrolysis of 4-amino-2-methyl-5-hydroxymethylpyrimidine pyrophosphate (HMP-PP) to 4-amino-2-methyl-5-hydroxymethylpyrimidine phosphate (HMP-P). In Salmonella schwarzengrund (strain CVM19633), this protein is HMP-PP phosphatase.